Reading from the N-terminus, the 338-residue chain is Protein FosB (338 aa).

Disordered stretches follow at residues 1–54 (MFQA…PGSF) and 80–179 (AQSQ…RREL). 2 stretches are compositionally biased toward polar residues: residues 13–31 (SRCS…SVDS) and 102–112 (TSYSTPGLSAY). Residue serine 27 is modified to Phosphoserine. Residues 123 to 137 (PSTSTTTSGPVSARP) show a composition bias toward low complexity. Residues 155-218 (EEKRRVRRER…ERLEFVLVAH (64 aa)) form the bZIP domain. The interval 157–182 (KRRVRRERNKLAAAKCRNRRRELTDR) is basic motif. The segment at 183-211 (LQAETDQLEEEKAELESEIAELQKEKERL) is leucine-zipper. 2 disordered regions span residues 222–276 (CKIP…PPNL) and 316–338 (GAQR…LLAL). Over residues 256-265 (LPPPPPPPLP) the composition is skewed to pro residues. Composition is skewed to polar residues over residues 266–276 (FQSSRDAPPNL) and 318–338 (QRTS…LLAL).

It belongs to the bZIP family. Fos subfamily. In terms of assembly, heterodimer; binds to DNA as heterodimer. Component of an AP-1 transcription factor complex; composed of FOS-JUN heterodimers. As part of the AP-1 transcription factor complex, forms heterodimers with JUN, JUNB or JUND, thereby binding to the AP-1 consensus sequence and stimulating transcription. Interacts with the BAF multiprotein chromatin-remodeling complex subunits SMARCB1 and SMARCD1. Interacts with ARID1A and JUN. Homodimer under oxidizing conditions and monomer under reducing conditions (in vitro). Heterodimer; binds to DNA as heterodimer. Forms heterodimers with JUNB, JUN or JUND; thereby binding to the AP-1 consensus sequence but does not stimulate transcription. Forms heterodimers with JUND under oxidizing conditions. Phosphorylated. Post-translationally, phosphorylated at Ser-27 by CSNK2A1; phosphorylation increases protein stability and transactivation potential. Expressed in brain, including the preoptic area of the hypothalamus, the main and accessory olfactory bulbs, the pyriform cortex and the hippocampus (at protein level). Expressed in the neurons of the subgranular zone of the dentate gyrus in the hippocampus (at protein level). Expressed in pyramidal cells in CA1 and CA3, in the dentate gyrus and the nucleus accumbens of the striatum (at protein level). As to expression, expressed in the core and shell of the nucleus accumbens of the striatum (at protein level). Expressed in the neurons of the subgranular zone of the dentate gyrus in the hippocampus (at protein level).

It is found in the nucleus. Its function is as follows. Heterodimerizes with proteins of the JUN family to form an AP-1 transcription factor complex, thereby enhancing their DNA binding activity to gene promoters containing an AP-1 consensus sequence 5'-TGA[GC]TCA-3' and enhancing their transcriptional activity. As part of the AP-1 complex, facilitates enhancer selection together with cell-type-specific transcription factors by collaboratively binding to nucleosomal enhancers and recruiting the SWI/SNF (BAF) chromatin remodeling complex to establish accessible chromatin. Together with JUN, plays a role in activation-induced cell death of T cells by binding to the AP-1 promoter site of FASLG/CD95L, and inducing its transcription in response to activation of the TCR/CD3 signaling pathway. Exhibits transactivation activity in vitro. Involved in the display of nurturing behavior towards newborns. May play a role in neurogenesis in the hippocampus and in learning and memory-related tasks by regulating the expression of various genes involved in neurogenesis, depression and epilepsy. Implicated in behavioral responses related to morphine reward and spatial memory. Exhibits lower transactivation activity than isoform 1 in vitro. The heterodimer with JUN does not display any transcriptional activity, and may thereby act as an transcriptional inhibitor. May be involved in the regulation of neurogenesis in the hippocampus. May play a role in synaptic modifications in nucleus accumbens medium spiny neurons and thereby play a role in adaptive and pathological reward-dependent learning, including maladaptive responses involved in drug addiction. Seems to be more stably expressed with a half-life of ~9.5 hours in cell culture as compared to 1.5 hours half-life of isoform 1. The chain is Protein FosB from Mus musculus (Mouse).